A 286-amino-acid polypeptide reads, in one-letter code: Flagellar filament 31.3 kDa core protein (286 aa).

The protein belongs to the bacterial flagellin family. In terms of assembly, the core of the flagellum consists of several antigenically related polypeptides. In terms of processing, glycosylated. Glycosylation is not essential for motility.

The protein localises to the periplasmic flagellum. It is found in the periplasm. Component of the core of the flagella. This Treponema maltophilum protein is Flagellar filament 31.3 kDa core protein (flaB2).